The primary structure comprises 379 residues: Protein hairy (379 aa).

The interval 20 to 50 is disordered; sequence STQQQQQQQQHKEAPIKSDRRSNKPIMEKRR. Over residues 29-47 the composition is skewed to basic and acidic residues; the sequence is QHKEAPIKSDRRSNKPIME. Residues 36–55 are interaction with Topors; it reads KSDRRSNKPIMEKRRRARIN. The bHLH domain maps to 38–95; sequence DRRSNKPIMEKRRRARINNCLNELKTLILDATKKDPARHSKLEKADILEKTVKHLQEL. Residues 114-143 form the Orange domain; it reads FKAGFADCANEVSRFPGLDSTQRRRLLQHL. Disordered regions lie at residues 167–208 and 298–345; these read QSLH…NTTA and QRTA…VKPS. 2 stretches are compositionally biased toward low complexity: residues 182-207 and 301-328; these read PEQE…TNTT and ASTG…GSYA. The short motif at 376–379 is the WRPW motif element; the sequence is WRPW.

In terms of assembly, transcription repression requires formation of a complex with a corepressor protein (Groucho).

Its subcellular location is the nucleus. Functionally, pair-rule protein that regulates embryonic segmentation and adult bristle patterning. Transcriptional repressor of genes that require a bHLH protein for their transcription (e.g. ftz). This chain is Protein hairy, found in Drosophila virilis (Fruit fly).